Consider the following 119-residue polypeptide: Ribonuclease P protein component (119 aa).

It belongs to the RnpA family. In terms of assembly, consists of a catalytic RNA component (M1 or rnpB) and a protein subunit.

It catalyses the reaction Endonucleolytic cleavage of RNA, removing 5'-extranucleotides from tRNA precursor.. Its function is as follows. RNaseP catalyzes the removal of the 5'-leader sequence from pre-tRNA to produce the mature 5'-terminus. It can also cleave other RNA substrates such as 4.5S RNA. The protein component plays an auxiliary but essential role in vivo by binding to the 5'-leader sequence and broadening the substrate specificity of the ribozyme. The sequence is that of Ribonuclease P protein component from Beutenbergia cavernae (strain ATCC BAA-8 / DSM 12333 / CCUG 43141 / JCM 11478 / NBRC 16432 / NCIMB 13614 / HKI 0122).